The following is a 2377-amino-acid chain: MTTALTFGGGLFKDNTKFDIDMRGTADGAVNGGNIPNSQSQKRKRASPSPEIESEEDGDDWYEIDYIADSRVIRRKGRQILQYLIHWAGYAVHERTWEDEDGIGGEDCALVQEFYRKNPGKPRLSPSSVRKEVKLARMVEVVITTRRIDGKSRAASSTDQPSPHRLGITSPQANNIGGEDPNPSLTRRPVRSTVSEIAKRPTSKKVHPNKKCKASSDDESDFVFEEGEWDEDEDDDNDVDFRSSEDDEDDEQERSAEEPESDEEIIKPAKKTKSSLPKAKLRPKPANLGGFVTGVRPLNQGLDIKAAVRNMSDDLPPISDIEAMFDHLVSRIPDIVELVRQLNGRKLRVATMCSGTESPLLALNMIAKAIKAQHGLTLAFEHVFSCEIEPFKQAYIERNFTPPILFRDVTELGKKRAHTAYGSMVDVPGDVDILIAGTSCVDYSNLNNVQQDIDANGESGRTFRGMLQWVKKHQPPIVILENVCNAPWDKVVEYFGQIDYDAQYTRLDTKEFYIPHTRTRVYLFATPSSSESDDLPEKWAQTVKDLRRPWSSPFEAFLLHTDDPNIHRARLELASARAQTDGTSRKTTDWNRCESRHQRARQDEALGLLRPLTSWQEAGVCKGLDWTWNDWLLAQTERVVDLLEISTLRMAKDGIDSGFKACIWNVSQNVDRQTGSSKTALAPCLTPNMIPWVTIRGGPVTGREALALQGIPVRELLLTSENEDQLADLAGNAMTTTVVGSAMIAALKVACHKITEGANPEKEAALILEKEAVDDEQVANRIIGEDYLEHHDLDLAKVTKSNLSEILDLACRSSRHCQCEGQSGTAPNILECQECSYRACKSCGGRPEHVYAPCANQRVEPAEFEKRFKGLLPMRVRIAGLTDQCLNAVRKAAEKSNKGSVNDNDWQLWSTALLEGIHDAEFRFRYLKRQSTWTAVYEARRAMLSLVLRNQIPEWRLTIKAPASEPNNSQLRALLLHPVARLQIDIAGQDVLCGPWELCIPSMKTIDIEITGKGELLPSWQASLGLQGPFANTTRWSEVEISLQAEDENTLDRKLSGTYQLLPRCGQAMSSLHKKRPDLSDDGLPQLYFFLDPTRCGESREDRYVFSTSTERLDYGTERPVIARLDSHWREGNEKQRKVKLDVSGAWVKCPEAHLTAIGGDDIAVVANDAAANEIHRDRATFAIPSSASAISASLTTEGCSHAMALLSCRVPLDPTHSESMWRRGAWAEIDLSHQGNTTFANLAWITERLPPLDGLKNWAHIADDVSEHVCERCAPRPPKIHWIKREGKANKKGNKTKSTIIAFEDKLEAGQYEHALKHRPSPFVVQLRLDQDIGSFRIGLNIVSLAHRALSRLPPTTSEHKISLSWRLTPGHVTESPQPRRVFILPSNKQDPENSQPEAFKLPLRKEQLRSLWWMLEQEKATGKTHTFVEEEISESLLPAVGWRAEGKAERPVMVRGGVIADQVGYGKTVISIALVAQTLSLPAPEPATPGLIDLKATLIVVPGHLSKQWPNEIARFTGSMFKVIVIQGMKDLQEKTIAELGKADIIVMASEIFESDVYWSRLEYLSAQPREWLHDTQGGRFFCDRLDAAMESLVSQTKILKEKGSEAAMRAMEDKKKSLVDNVGSKKEVHTAVNFGKRMKGQAYRDKHDSDSKAKPITKEELERWEASEDEDDDENSKTYIPIPKFHSFTGSESIFSASVKKDYKLLPNPVLHMFRFRRVIADEFTYLQKKSLAAVLRLSSSYRWILSGTPPVSDFAAIRSIATFMGIHLGVEDDGEGDVQYQKARAKDQTQAEKFHAFREVHSRAWHNRRDELAQEFLNVFVRQNIAEIEDIPTVEHIHTFKLPASEGAVYLELEHHLQALEMQARKETKFKNVSQGDRNARLEEALSDSKTAEEALLKRCCHFTLDLSDKTQDAKSAQEACDHITSARARQLLACQEDLSRSVNQAIALHGWIKKKGGFSKNDDERQPFAEWIAFSSNISKHQGDIEAARILLKVIEKCGVKDGNIPPSPSDKQSPSIASGAKMDDVKWQLREQTHLLRKLVKELVARVRSLRFFEVVRKIQKGKSDAQIVLESSECGHKPSTNPDIEMAILSCCGHVACHKCMRKAAASQRCVKSGECQAAVRPTNIVKVSSLGVEGELSSGRYGAKLEHLVNLIHSIPKNERVLVFLQWEDLAGKVSEALSAGRIPHVTLSGSAKSRANTLDRFQSTNADSARVLLLKMNDASAAGSNLTTANHAVFLGPLFTNSLFNYRAVETQAIGRVRRYGQQKKVHIHRLLALDTIDMTIFNARRTELKEKTDWEEIPQEEYKGRGSSISMTNEKRTPTLTVKSNPFKRSSSWALASSFRSKKRSMEARDAEGVSDDDENSELSDII.

A disordered region spans residues 24 to 56 (GTADGAVNGGNIPNSQSQKRKRASPSPEIESEE). In terms of domain architecture, Chromo; shadow subtype spans 62–126 (YEIDYIADSR…KNPGKPRLSP (65 aa)). Residues 150–282 (GKSRAASSTD…KSSLPKAKLR (133 aa)) are disordered. Basic residues predominate over residues 201-213 (PTSKKVHPNKKCK). Acidic residues-rich tracts occupy residues 217–238 (DDES…DDND) and 245–263 (EDDE…ESDE). Basic residues predominate over residues 268–282 (PAKKTKSSLPKAKLR). Positions 347–753 (LRVATMCSGT…IAALKVACHK (407 aa)) constitute an SAM-dependent MTase C5-type domain. Cys440 is a catalytic residue. One can recognise a Helicase ATP-binding domain in the interval 1450–1771 (AERPVMVRGG…RSIATFMGIH (322 aa)). 1463–1470 (DQVGYGKT) lines the ATP pocket. Disordered stretches follow at residues 1642-1680 (KGQA…ENSK), 2313-2334 (KGRG…TVKS), and 2347-2377 (SSFR…SDII). Basic and acidic residues predominate over residues 1645–1669 (AYRDKHDSDSKAKPITKEELERWEA). One can recognise a Helicase C-terminal domain in the interval 2152–2315 (KLEHLVNLIH…EIPQEEYKGR (164 aa)). Positions 2317–2334 (SSISMTNEKRTPTLTVKS) are enriched in polar residues. Residues 2363 to 2377 (GVSDDDENSELSDII) are compositionally biased toward acidic residues.

In the N-terminal section; belongs to the class I-like SAM-binding methyltransferase superfamily. C5-methyltransferase family. This sequence in the C-terminal section; belongs to the SNF2/RAD54 helicase family. In terms of assembly, interacts with SWI6. Requires Mg(2+) as cofactor.

It is found in the nucleus. Its subcellular location is the chromosome. The catalysed reaction is a 2'-deoxycytidine in DNA + S-adenosyl-L-methionine + ATP + H2O = a 5-methyl-2'-deoxycytidine in DNA + S-adenosyl-L-homocysteine + ADP + phosphate + 2 H(+). Hemimethylated DNA substrates stimulate ATP hydrolysis and this is a prerequisite for methyltransferase activity. Functionally, ATP-dependent cytosine methylase that maintains DNA methylation by acting at hemimethylated palindromic 5'-CG-3' sites to produce symmetrically methylated DNA strands. DNA methylation may play a role in transcriptional silencing, particularly at transposable elements. The chain is DNA (cytosine-5-)-methyltransferase DMT5 from Cryptococcus neoformans var. grubii serotype A (strain H99 / ATCC 208821 / CBS 10515 / FGSC 9487) (Filobasidiella neoformans var. grubii).